The sequence spans 261 residues: Epidermal growth factor-binding protein type B (261 aa).

An N-terminal signal peptide occupies residues 1-16; that stretch reads MWFLILFLALSLGGID. A propeptide spans 17–24 (activation peptide); sequence AAPPLQSR. The Peptidase S1 domain occupies 25–258; the sequence is VVGGFNCKKN…FNSWIKDTMM (234 aa). 5 disulfide bridges follow: cysteine 31–cysteine 173, cysteine 50–cysteine 66, cysteine 152–cysteine 219, cysteine 184–cysteine 198, and cysteine 209–cysteine 234. The active-site Charge relay system is the histidine 65. An N-linked (GlcNAc...) asparagine glycan is attached at asparagine 102. The Charge relay system role is filled by aspartate 120. Serine 213 serves as the catalytic Charge relay system.

The protein belongs to the peptidase S1 family. Kallikrein subfamily.

The catalysed reaction is Hydrolyzes mouse Ren2 protein (a species of prorenin present in the submandibular gland) on the carboxy side of the arginine residue at the Lys-Arg-|- pair in the N-terminus, to yield mature renin.. In terms of biological role, cleaves REN2 at a dibasic site to yield mature renin. The protein is Epidermal growth factor-binding protein type B (Egfbp2) of Mus musculus (Mouse).